A 149-amino-acid polypeptide reads, in one-letter code: Transcriptional repressor NrdR (149 aa).

The segment at Cys3 to Cys34 is a zinc-finger region. The 91-residue stretch at Pro49 to Glu139 folds into the ATP-cone domain.

Belongs to the NrdR family. It depends on Zn(2+) as a cofactor.

Negatively regulates transcription of bacterial ribonucleotide reductase nrd genes and operons by binding to NrdR-boxes. In Edwardsiella ictaluri (strain 93-146), this protein is Transcriptional repressor NrdR.